The chain runs to 477 residues: Glycogen synthase (477 aa).

Position 15 (lysine 15) interacts with ADP-alpha-D-glucose.

Belongs to the glycosyltransferase 1 family. Bacterial/plant glycogen synthase subfamily.

The catalysed reaction is [(1-&gt;4)-alpha-D-glucosyl](n) + ADP-alpha-D-glucose = [(1-&gt;4)-alpha-D-glucosyl](n+1) + ADP + H(+). Its pathway is glycan biosynthesis; glycogen biosynthesis. Functionally, synthesizes alpha-1,4-glucan chains using ADP-glucose. In Edwardsiella ictaluri (strain 93-146), this protein is Glycogen synthase.